Reading from the N-terminus, the 50-residue chain is uncharacterized protein (50 aa).

A helical membrane pass occupies residues 5–19 (IIIIVIVIIIFFFYL). The stretch at 19 to 50 (LKQKKLTNCETQVVKVQKDIDEINLKLKKLNK) forms a coiled coil.

The protein localises to the membrane. This is an uncharacterized protein from Acheta domesticus (House cricket).